The following is a 156-amino-acid chain: 6,7-dimethyl-8-ribityllumazine synthase (156 aa).

5-amino-6-(D-ribitylamino)uracil contacts are provided by residues phenylalanine 22, 57-59 (AYE), and 81-83 (TVI). 86 to 87 (GT) contributes to the (2S)-2-hydroxy-3-oxobutyl phosphate binding site. Histidine 89 functions as the Proton donor in the catalytic mechanism. Phenylalanine 114 serves as a coordination point for 5-amino-6-(D-ribitylamino)uracil. (2S)-2-hydroxy-3-oxobutyl phosphate is bound at residue arginine 128.

Belongs to the DMRL synthase family. Forms an icosahedral capsid composed of 60 subunits, arranged as a dodecamer of pentamers.

The enzyme catalyses (2S)-2-hydroxy-3-oxobutyl phosphate + 5-amino-6-(D-ribitylamino)uracil = 6,7-dimethyl-8-(1-D-ribityl)lumazine + phosphate + 2 H2O + H(+). The protein operates within cofactor biosynthesis; riboflavin biosynthesis; riboflavin from 2-hydroxy-3-oxobutyl phosphate and 5-amino-6-(D-ribitylamino)uracil: step 1/2. Its function is as follows. Catalyzes the formation of 6,7-dimethyl-8-ribityllumazine by condensation of 5-amino-6-(D-ribitylamino)uracil with 3,4-dihydroxy-2-butanone 4-phosphate. This is the penultimate step in the biosynthesis of riboflavin. The chain is 6,7-dimethyl-8-ribityllumazine synthase from Proteus mirabilis (strain HI4320).